The primary structure comprises 220 residues: Kinetochore protein Spc25 (220 aa).

A coiled-coil region spans residues 79–114 (HLTQEVEAIKLRNLAMKDQIKQQKMLNNQRKNEIME).

This sequence belongs to the SPC25 family. In terms of assembly, component of the Ndc80 complex, which is composed of Ndc80, Nuf2 and Spc25.

The protein localises to the nucleus. It localises to the chromosome. The protein resides in the centromere. It is found in the kinetochore. Acts as a component of the essential kinetochore-associated Ndc80 complex, which is required for chromosome segregation and spindle checkpoint activity during meiosis and mitosis. Required for kinetochore integrity and the organization of stable microtubule binding sites in the outer plate of the kinetochore. Participates in SAC signaling that responds specifically to disruptions in spindle microtubule dynamics. The NDC80 complex synergistically enhances the affinity of the SKA1 complex for microtubules and may allow the NDC80 complex to track depolymerizing microtubules. The chain is Kinetochore protein Spc25 from Drosophila orena (Fruit fly).